We begin with the raw amino-acid sequence, 173 residues long: Chromophore lyase CpcS/CpeS 3 (173 aa).

The protein belongs to the CpcS/CpeS biliprotein lyase family.

Functionally, covalently attaches a chromophore to Cys residue(s) of phycobiliproteins. The polypeptide is Chromophore lyase CpcS/CpeS 3 (Trichodesmium erythraeum (strain IMS101)).